Reading from the N-terminus, the 457-residue chain is Chromogranin-A (457 aa).

Positions 1-18 (MRSAAVLALLLCAGQVTA) are cleaved as a signal peptide. Residues C35 and C56 are joined by a disulfide bond. The interval 41 to 59 (SDTLSKPSPMPVSQECFET) is O-glycosylated at one site only in cerebrospinal fluid. The segment at 88–440 (KERAHQQKKH…DQELESLSAI (353 aa)) is disordered. Positions 116–144 (ELKEAVEEPSSKDVMEKREDSKEAEKSGE) are enriched in basic and acidic residues. S142 carries the phosphoserine modification. Residues 171–180 (GEEEEEEEEA) show a composition bias toward acidic residues. O-linked (GalNAc...) threonine glycans are attached at residues T181 and T183. The tract at residues 181–191 (TNTHPPASLPS) is O-glycosylated at one site only in cerebrospinal fluid. The span at 182–191 (NTHPPASLPS) shows a compositional bias: polar residues. Phosphotyrosine is present on Y194. 2 positions are modified to phosphoserine: S203 and S218. Acidic residues predominate over residues 229-249 (EEEEEEEEAEAGEEAVPEEEG). An O-linked (GalNAc...) threonine glycan is attached at T251. 2 stretches are compositionally biased toward basic and acidic residues: residues 263–272 (KEIRKGESRS) and 291–303 (PEGK…SQQK). Phosphoserine occurs at positions 270 and 300. The residue at position 319 (G319) is a Glycine amide. S322, S333, and S371 each carry phosphoserine. The span at 330–360 (ERLSKEWEDSKRWSKMDQLAKELTAEKRLEG) shows a compositional bias: basic and acidic residues. M372 is subject to Methionine sulfoxide. A phosphoserine mark is found at S398, S402, S424, and S438. Over residues 414–431 (YPEEKKEEEGSANRRPED) the composition is skewed to basic and acidic residues. O-linked (Xyl...) (chondroitin sulfate) serine glycosylation is present at S424. R456 carries the arginine amide modification.

It belongs to the chromogranin/secretogranin protein family. In terms of assembly, self-interacts; self-assembly is promoted in vitro by chondroitin sulfate attachment which occurs at mildly acidic pH conditions. Interacts with SCG3. Interacts with ITPR1 in the secretory granules. Sulfated on tyrosine residues and/or contains sulfated glycans. Post-translationally, O-glycosylated with core 1 or possibly core 8 glycans. Contains chondroitin sulfate (CS); CS attachment is pH-dependent, being observed at mildly acidic conditions of pH 5 but not at neutral pH, and promotes self-assembly in vitro. In terms of processing, proteolytic processing gives rise to an additional longer form of catestatin (residues 358-390) which displays a less potent catecholamine release-inhibitory activity. Plasmin-mediated proteolytic processing can give rise to additional shorter and longer forms of catestatin peptides. Detected in cerebrospinal fluid (at protein level). Detected in urine (at protein level). In terms of tissue distribution, found in the brain.

It is found in the secreted. The protein resides in the cytoplasmic vesicle. It localises to the secretory vesicle. The protein localises to the neuronal dense core vesicle. Functionally, strongly inhibits glucose induced insulin release from the pancreas. Inhibits catecholamine release from chromaffin cells and noradrenergic neurons by acting as a non-competitive nicotinic cholinergic antagonist. Displays antibacterial activity against Gram-positive bacteria S.aureus and M.luteus, and Gram-negative bacteria E.coli and P.aeruginosa. Can induce mast cell migration, degranulation and production of cytokines and chemokines. Acts as a potent scavenger of free radicals in vitro. May play a role in the regulation of cardiac function and blood pressure. In terms of biological role, regulates granule biogenesis in endocrine cells by up-regulating the transcription of protease nexin 1 (SERPINE2) via a cAMP-PKA-SP1 pathway. This leads to inhibition of granule protein degradation in the Golgi complex which in turn promotes granule formation. This is Chromogranin-A (CHGA) from Homo sapiens (Human).